Here is a 102-residue protein sequence, read N- to C-terminus: Citrate lyase acyl carrier protein (102 aa).

An O-(phosphoribosyl dephospho-coenzyme A)serine modification is found at Ser-14.

Belongs to the CitD family. Oligomer with a subunit composition of (alpha,beta,gamma)6.

It localises to the cytoplasm. Functionally, covalent carrier of the coenzyme of citrate lyase. This Streptococcus equi subsp. equi (strain 4047) protein is Citrate lyase acyl carrier protein.